Reading from the N-terminus, the 322-residue chain is Ferric-anguibactin-binding protein FatB (322 aa).

The N-terminal stretch at 1-22 (MFKSTLNIAVAIVCSSLVTLTG) is a signal peptide. Residue cysteine 23 is the site of N-palmitoyl cysteine attachment. The S-diacylglycerol cysteine moiety is linked to residue cysteine 23. One can recognise a Fe/B12 periplasmic-binding domain in the interval 57–322 (RVAALDMNEV…IDDIIKGYQS (266 aa)).

It belongs to the bacterial solute-binding protein 8 family. In terms of assembly, part of an iron transport system composed of the outer membrane receptor FatA, the periplasmic binding protein FatB and the inner membrane proteins FatC and FatD.

The protein resides in the cell inner membrane. Involved in the uptake of iron in complex with the siderophore anguibactin. Binds ferric-anguibactin in the periplasm and mediates its transport into the cytoplasm. The polypeptide is Ferric-anguibactin-binding protein FatB (Vibrio anguillarum (strain ATCC 68554 / 775) (Listonella anguillarum)).